The sequence spans 163 residues: MRVAVFPGSFDPITWGHIDLIKRSLAIFDKVIVLVAKNKSKKYFLSDIERFSLTKDVISSLNFSNVLVDRYSGFIVDYALINSIKFIVRGIRAFNDFDIEFERYLVNNKLNFEIDTIFLPSSAEHLYVRSDFVKELMLKKDVDLSNFVPELVFNRLKSKFIDK.

Residue Ser-9 coordinates substrate. ATP-binding positions include 9–10 and His-17; that span reads SF. Residues Lys-41, Ile-75, and Arg-89 each coordinate substrate. Residues 90-92, Glu-100, and 125-131 contribute to the ATP site; these read GIR and HLYVRSD.

The protein belongs to the bacterial CoaD family. In terms of assembly, homohexamer. Mg(2+) serves as cofactor.

Its subcellular location is the cytoplasm. The enzyme catalyses (R)-4'-phosphopantetheine + ATP + H(+) = 3'-dephospho-CoA + diphosphate. Its pathway is cofactor biosynthesis; coenzyme A biosynthesis; CoA from (R)-pantothenate: step 4/5. Functionally, reversibly transfers an adenylyl group from ATP to 4'-phosphopantetheine, yielding dephospho-CoA (dPCoA) and pyrophosphate. The polypeptide is Phosphopantetheine adenylyltransferase (Borreliella burgdorferi (strain ZS7) (Borrelia burgdorferi)).